We begin with the raw amino-acid sequence, 218 residues long: Ras-related protein Rab-4A (218 aa).

9 residues coordinate GTP: Gly-23, Thr-24, Gly-25, Lys-26, Ser-27, Cys-28, Ser-42, His-44, and Thr-45. Ser-27 is a binding site for Mg(2+). A Switch 1 motif is present at residues 44-49 (HTIGVE). Residues Thr-45 and Asp-68 each coordinate Mg(2+). A Switch 2 motif is present at residues 70-79 (AGQERFRSVT). Gly-71 is a binding site for GTP. At Gln-72 the chain carries 5-glutamyl serotonin. Residues Asn-126, Lys-127, Asp-129, Ala-157, and Leu-158 each coordinate GTP. Ser-190 carries the post-translational modification Phosphoserine. Ser-204 bears the Phosphoserine; by CDK1 mark. 2 S-geranylgeranyl cysteine lipidation sites follow: Cys-216 and Cys-218. At Cys-218 the chain carries Cysteine methyl ester.

This sequence belongs to the small GTPase superfamily. Rab family. In terms of assembly, interacts with RAB11FIP1, RABEP1, ZFYVE20 and RUFY1. Interacts with SGSM1, SGSM2 and SGSM3. Interacts (membrane-bound form) with NDRG1; the interaction involves NDRG1 in vesicular recycling of E-cadherin. Interacts (in GTP-bound form) with GRIPAP1. Interacts with RABEP1 and RBSN. Does not interact with HPS4. It depends on Mg(2+) as a cofactor. In terms of processing, serotonylation of Gln-72 by TGM2 during activation and aggregation of platelets leads to constitutive activation of GTPase activity. Phosphorylated by CDK1 kinase during mitosis.

It is found in the membrane. The protein resides in the cytoplasm. Its subcellular location is the early endosome membrane. The protein localises to the recycling endosome membrane. It carries out the reaction GTP + H2O = GDP + phosphate + H(+). With respect to regulation, regulated by guanine nucleotide exchange factors (GEFs) which promote the exchange of bound GDP for free GTP. Regulated by GTPase activating proteins (GAPs) which increase the GTP hydrolysis activity. Inhibited by GDP dissociation inhibitors (GDIs). In terms of biological role, the small GTPases Rab are key regulators of intracellular membrane trafficking, from the formation of transport vesicles to their fusion with membranes. Rabs cycle between an inactive GDP-bound form and an active GTP-bound form that is able to recruit to membranes different sets of downstream effectors directly responsible for vesicle formation, movement, tethering and fusion. RAB4A is involved in protein transport. Also plays a role in vesicular traffic. Mediates VEGFR2 endosomal trafficking to enhance VEGFR2 signaling. Acts as a regulator of platelet alpha-granule release during activation and aggregation of platelets. The polypeptide is Ras-related protein Rab-4A (RAB4A) (Bos taurus (Bovine)).